The following is a 401-amino-acid chain: Large ribosomal subunit protein uL3 (401 aa).

The disordered stretch occupies residues 1–21; sequence MSHRKFSAPRHGHMGFTPKKR.

The protein belongs to the universal ribosomal protein uL3 family.

It is found in the cytoplasm. In terms of biological role, the L3 protein is a component of the large subunit of cytoplasmic ribosomes. The polypeptide is Large ribosomal subunit protein uL3 (rpl-3) (Caenorhabditis briggsae).